A 342-amino-acid polypeptide reads, in one-letter code: UDP-3-O-acylglucosamine N-acyltransferase (342 aa).

Histidine 243 serves as the catalytic Proton acceptor.

It belongs to the transferase hexapeptide repeat family. LpxD subfamily. As to quaternary structure, homotrimer.

It carries out the reaction a UDP-3-O-[(3R)-3-hydroxyacyl]-alpha-D-glucosamine + a (3R)-hydroxyacyl-[ACP] = a UDP-2-N,3-O-bis[(3R)-3-hydroxyacyl]-alpha-D-glucosamine + holo-[ACP] + H(+). It functions in the pathway bacterial outer membrane biogenesis; LPS lipid A biosynthesis. In terms of biological role, catalyzes the N-acylation of UDP-3-O-acylglucosamine using 3-hydroxyacyl-ACP as the acyl donor. Is involved in the biosynthesis of lipid A, a phosphorylated glycolipid that anchors the lipopolysaccharide to the outer membrane of the cell. In Coxiella burnetii (strain CbuK_Q154) (Coxiella burnetii (strain Q154)), this protein is UDP-3-O-acylglucosamine N-acyltransferase.